A 215-amino-acid chain; its full sequence is Leucyl/phenylalanyl-tRNA--protein transferase (215 aa).

Belongs to the L/F-transferase family.

Its subcellular location is the cytoplasm. It catalyses the reaction N-terminal L-lysyl-[protein] + L-leucyl-tRNA(Leu) = N-terminal L-leucyl-L-lysyl-[protein] + tRNA(Leu) + H(+). It carries out the reaction N-terminal L-arginyl-[protein] + L-leucyl-tRNA(Leu) = N-terminal L-leucyl-L-arginyl-[protein] + tRNA(Leu) + H(+). The enzyme catalyses L-phenylalanyl-tRNA(Phe) + an N-terminal L-alpha-aminoacyl-[protein] = an N-terminal L-phenylalanyl-L-alpha-aminoacyl-[protein] + tRNA(Phe). Functionally, functions in the N-end rule pathway of protein degradation where it conjugates Leu, Phe and, less efficiently, Met from aminoacyl-tRNAs to the N-termini of proteins containing an N-terminal arginine or lysine. In Campylobacter jejuni subsp. doylei (strain ATCC BAA-1458 / RM4099 / 269.97), this protein is Leucyl/phenylalanyl-tRNA--protein transferase.